The primary structure comprises 321 residues: Isopenicillin N synthase (321 aa).

The interval 1-42 is disordered; it reads MPVLMPSADVPTIDISPQLFGTDPTPRRTSRGRSTRPARGSG. Isopenicillin N-binding residues include R87, Y91, and Y188. Residues R87, Y91, Y188, H213, and D215 each coordinate N-[(5S)-5-amino-5-carboxypentanoyl]-L-cysteinyl-D-valine. Residues 179-287 form the Fe2OG dioxygenase domain; it reads TLSAVSMIRY…RLSLPFFLHA (109 aa). Fe(2+)-binding residues include H213, D215, and H269. R278 contacts 2-oxoglutarate. S280 provides a ligand contact to isopenicillin N. Position 280 (S280) interacts with N-[(5S)-5-amino-5-carboxypentanoyl]-L-cysteinyl-D-valine.

The protein belongs to the iron/ascorbate-dependent oxidoreductase family. Requires Fe cation as cofactor. It depends on L-ascorbate as a cofactor.

It carries out the reaction N-[(5S)-5-amino-5-carboxypentanoyl]-L-cysteinyl-D-valine + O2 = isopenicillin N + 2 H2O. It participates in antibiotic biosynthesis; penicillin G biosynthesis; penicillin G from L-alpha-aminoadipate and L-cysteine and L-valine: step 2/3. Its function is as follows. Removes, in the presence of oxygen, 4 hydrogen atoms from delta-L-(alpha-aminoadipyl)-L-cysteinyl-D-valine (ACV) to form the azetidinone and thiazolidine rings of isopenicillin. This is Isopenicillin N synthase (pcbC) from Streptantibioticus cattleyicolor (Streptomyces cattleya).